We begin with the raw amino-acid sequence, 114 residues long: Iron-sulfur cluster insertion protein ErpA (114 aa).

Cys-42, Cys-106, and Cys-108 together coordinate iron-sulfur cluster.

It belongs to the HesB/IscA family. In terms of assembly, homodimer. The cofactor is iron-sulfur cluster.

In terms of biological role, required for insertion of 4Fe-4S clusters for at least IspG. This chain is Iron-sulfur cluster insertion protein ErpA, found in Proteus mirabilis (strain HI4320).